A 205-amino-acid chain; its full sequence is Protein-L-isoaspartate O-methyltransferase (205 aa).

The active site involves S56.

It belongs to the methyltransferase superfamily. L-isoaspartyl/D-aspartyl protein methyltransferase family.

Its subcellular location is the cytoplasm. It carries out the reaction [protein]-L-isoaspartate + S-adenosyl-L-methionine = [protein]-L-isoaspartate alpha-methyl ester + S-adenosyl-L-homocysteine. Catalyzes the methyl esterification of L-isoaspartyl residues in peptides and proteins that result from spontaneous decomposition of normal L-aspartyl and L-asparaginyl residues. It plays a role in the repair and/or degradation of damaged proteins. The sequence is that of Protein-L-isoaspartate O-methyltransferase from Aeromonas hydrophila subsp. hydrophila (strain ATCC 7966 / DSM 30187 / BCRC 13018 / CCUG 14551 / JCM 1027 / KCTC 2358 / NCIMB 9240 / NCTC 8049).